Consider the following 372-residue polypeptide: Cytochrome b (372 aa).

The next 4 membrane-spanning stretches (helical) occupy residues 25–45 (FGSM…FLSM), 69–90 (WMMQ…YIHV), 105–125 (WLSG…GYVL), and 170–190 (FFAL…LHIM). Heme b is bound by residues histidine 75 and histidine 89. Residues histidine 174 and histidine 188 each contribute to the heme b site. Histidine 193 serves as a coordination point for a ubiquinone. 4 helical membrane passes run 218 to 238 (YKDL…ISFI), 280 to 300 (LGGA…PFTH), 312 to 332 (FMQL…WTAT), and 339 to 358 (YTMI…MSNP).

The protein belongs to the cytochrome b family. As to quaternary structure, the cytochrome bc1 complex contains 3 respiratory subunits (MT-CYB, CYC1 and UQCRFS1), 2 core proteins (UQCRC1 and UQCRC2) and probably 6 low-molecular weight proteins. Heme b serves as cofactor.

Its subcellular location is the mitochondrion inner membrane. In terms of biological role, component of the ubiquinol-cytochrome c reductase complex (complex III or cytochrome b-c1 complex) that is part of the mitochondrial respiratory chain. The b-c1 complex mediates electron transfer from ubiquinol to cytochrome c. Contributes to the generation of a proton gradient across the mitochondrial membrane that is then used for ATP synthesis. This Acrantophis madagascariensis (Madagascar ground boa) protein is Cytochrome b (MT-CYB).